We begin with the raw amino-acid sequence, 288 residues long: Quinate/shikimate dehydrogenase (288 aa).

Substrate contacts are provided by Lys-71 and Asp-107. Residues 132-135 (AGGA), 155-158 (NRRD), Lys-205, 232-235 (CVYN), and Gly-255 each bind NAD(+).

The protein belongs to the shikimate dehydrogenase family. In terms of assembly, homodimer.

It catalyses the reaction L-quinate + NAD(+) = 3-dehydroquinate + NADH + H(+). It carries out the reaction L-quinate + NADP(+) = 3-dehydroquinate + NADPH + H(+). The catalysed reaction is shikimate + NADP(+) = 3-dehydroshikimate + NADPH + H(+). The enzyme catalyses shikimate + NAD(+) = 3-dehydroshikimate + NADH + H(+). The protein operates within metabolic intermediate biosynthesis; chorismate biosynthesis; chorismate from D-erythrose 4-phosphate and phosphoenolpyruvate: step 4/7. Its function is as follows. The actual biological function of YdiB remains unclear, nor is it known whether 3-dehydroshikimate or quinate represents the natural substrate. Catalyzes the reversible NAD-dependent reduction of both 3-dehydroshikimate (DHSA) and 3-dehydroquinate to yield shikimate (SA) and quinate, respectively. It can use both NAD or NADP for catalysis, however it has higher catalytic efficiency with NAD. In Escherichia coli (strain SMS-3-5 / SECEC), this protein is Quinate/shikimate dehydrogenase.